Consider the following 2058-residue polypeptide: E3 ubiquitin-protein ligase ubr-1 (2058 aa).

The UBR-type zinc-finger motif lies at 93 to 164 (QICGHVFKNG…EGYACANHEK (72 aa)). The segment at 1107–1175 (VPEAAPAPEN…TPSEKSETVV (69 aa)) is disordered. Residues 1108-1119 (PEAAPAPENKPA) show a composition bias toward low complexity. Basic and acidic residues-rich tracts occupy residues 1123–1138 (EEIK…EMRQ) and 1153–1175 (KKIE…ETVV). The segment at 1217–1335 (LTCILCQEDE…GEYQCPLCKR (119 aa)) adopts an RING-type; atypical zinc-finger fold. 2 disordered regions span residues 1381 to 1416 (LSSE…DTAN) and 1475 to 1499 (PAAT…ESGK). The segment covering 1388 to 1397 (KKGHSRKRSH) has biased composition (basic residues). Residues 1398–1413 (SERSLLDLEKLSKDPD) are compositionally biased toward basic and acidic residues. The span at 1486-1495 (GSSSRIPESQ) shows a compositional bias: polar residues. The helical transmembrane segment at 1695–1715 (ILQIDILSLAISLMMTIGWTW) threads the bilayer.

It belongs to the E3 ubiquitin-protein ligase UBR1-like family. As to quaternary structure, interacts with ubc-1. Component of a complex containing at least ced-3, ubr-1 and possibly ate-1. Within complex interacts with ced-3 (via the p17 subunit); this interaction is required for the ced-3-mediated cleavage and subsequent degradation of the heterochronic protein lin-28. As to expression, expressed in pharyngeal muscles, body wall muscles and a subset of neurons throughout postembryonic development. Prominently expressed in premotor interneurons, but not expressed in ventral cord motor neurons. Weakly expressed in hypodermal seam cells.

The protein resides in the membrane. It catalyses the reaction S-ubiquitinyl-[E2 ubiquitin-conjugating enzyme]-L-cysteine + [acceptor protein]-L-lysine = [E2 ubiquitin-conjugating enzyme]-L-cysteine + N(6)-ubiquitinyl-[acceptor protein]-L-lysine.. It participates in protein modification; protein ubiquitination. E3 ubiquitin-protein ligase which is a component of the N-end rule pathway. Recognizes and binds to proteins bearing specific N-terminal residues that are destabilizing according to the N-end rule, leading to their ubiquitination and subsequent degradation. In complex with ced-3, required for the ced-3-mediated cleavage and subsequent degradation of the heterochronic protein lin-28 to regulate seam cell fate patterning during larval development. Negatively regulates glutamate metabolism through the aspartate aminotransferase got-1.2. Modulation of glutamate levels most likely controls locomotory behavior, in particular backwards locomotion or 'reversals'. The polypeptide is E3 ubiquitin-protein ligase ubr-1 (Caenorhabditis elegans).